Reading from the N-terminus, the 290-residue chain is Homeobox protein HMX3-B (290 aa).

Disordered stretches follow at residues 1–41 (MADS…GSSK) and 96–169 (EKVN…KKKT). Basic and acidic residues predominate over residues 107 to 124 (LDRHTPDPPKSDQESKEE). Positions 125 to 137 (SADDEIALEESDA) are enriched in acidic residues. A compositionally biased stretch (basic and acidic residues) spans 138 to 162 (EEPKKETDQEDDWMRKGEDLESDKK). Positions 166 to 225 (KKKTRTVFSRSQVFQLESTFDIKRYLSSSERAGLAASLHLTETQVKIWFQNRRNKWKRQL) form a DNA-binding region, homeobox.

It belongs to the HMX homeobox family. As to expression, expressed in the ear placode and vesicle and in cells forming the vestibulo-acoustic ganglion.

Its subcellular location is the nucleus. Functionally, transcription factor involved in specification of neuronal cell types and which is required for inner ear and hypothalamus development. Binds to the 5'-CAAGTG-3' core sequence. In Oryzias latipes (Japanese rice fish), this protein is Homeobox protein HMX3-B (hmx3b).